Consider the following 92-residue polypeptide: Small ribosomal subunit protein uS19c (92 aa).

This sequence belongs to the universal ribosomal protein uS19 family.

It is found in the plastid. The protein resides in the chloroplast. In terms of biological role, protein S19 forms a complex with S13 that binds strongly to the 16S ribosomal RNA. The chain is Small ribosomal subunit protein uS19c from Angiopteris evecta (Mule's foot fern).